We begin with the raw amino-acid sequence, 264 residues long: Hydroxyethylthiazole kinase (264 aa).

M55 provides a ligand contact to substrate. ATP is bound by residues R130 and S176. Residue G203 participates in substrate binding.

This sequence belongs to the Thz kinase family. Requires Mg(2+) as cofactor.

It catalyses the reaction 5-(2-hydroxyethyl)-4-methylthiazole + ATP = 4-methyl-5-(2-phosphooxyethyl)-thiazole + ADP + H(+). It functions in the pathway cofactor biosynthesis; thiamine diphosphate biosynthesis; 4-methyl-5-(2-phosphoethyl)-thiazole from 5-(2-hydroxyethyl)-4-methylthiazole: step 1/1. Functionally, catalyzes the phosphorylation of the hydroxyl group of 4-methyl-5-beta-hydroxyethylthiazole (THZ). This is Hydroxyethylthiazole kinase from Leptospira borgpetersenii serovar Hardjo-bovis (strain JB197).